Here is a 513-residue protein sequence, read N- to C-terminus: ATP synthase subunit alpha (513 aa).

An ATP-binding site is contributed by 169-176; the sequence is GDRQIGKT.

The protein belongs to the ATPase alpha/beta chains family. F-type ATPases have 2 components, CF(1) - the catalytic core - and CF(0) - the membrane proton channel. CF(1) has five subunits: alpha(3), beta(3), gamma(1), delta(1), epsilon(1). CF(0) has three main subunits: a(1), b(2) and c(9-12). The alpha and beta chains form an alternating ring which encloses part of the gamma chain. CF(1) is attached to CF(0) by a central stalk formed by the gamma and epsilon chains, while a peripheral stalk is formed by the delta and b chains.

The protein resides in the cell inner membrane. The catalysed reaction is ATP + H2O + 4 H(+)(in) = ADP + phosphate + 5 H(+)(out). In terms of biological role, produces ATP from ADP in the presence of a proton gradient across the membrane. The alpha chain is a regulatory subunit. This chain is ATP synthase subunit alpha, found in Francisella philomiragia subsp. philomiragia (strain ATCC 25017 / CCUG 19701 / FSC 153 / O#319-036).